A 307-amino-acid polypeptide reads, in one-letter code: Nucleotide-binding protein ACP_0619 (307 aa).

A compositionally biased stretch (basic and acidic residues) spans 1–14; the sequence is MPAPEPTRRAKKDA. A disordered region spans residues 1–23; sequence MPAPEPTRRAKKDASASPSPAHP. 33–40 provides a ligand contact to ATP; that stretch reads GLSGAGKG. GTP is bound at residue 83 to 86; that stretch reads DVRE.

Belongs to the RapZ-like family.

Displays ATPase and GTPase activities. The protein is Nucleotide-binding protein ACP_0619 of Acidobacterium capsulatum (strain ATCC 51196 / DSM 11244 / BCRC 80197 / JCM 7670 / NBRC 15755 / NCIMB 13165 / 161).